The primary structure comprises 576 residues: (+)-alpha-terpineol synthase (576 aa).

(2E)-geranyl diphosphate contacts are provided by arginine 286, aspartate 323, aspartate 327, arginine 466, and asparagine 469. Residues aspartate 323 and aspartate 327 each coordinate Mg(2+). A DDXXD motif motif is present at residues 323-327; that stretch reads DDVYD. Asparagine 469, threonine 473, and glutamate 477 together coordinate Mg(2+).

Belongs to the terpene synthase family. Tpsb subfamily. Requires Mg(2+) as cofactor. Mn(2+) is required as a cofactor.

It carries out the reaction (2E,6E)-farnesyl diphosphate = beta-bisabolene + diphosphate. The catalysed reaction is (2E)-geranyl diphosphate + H2O = (R)-alpha-terpineol + diphosphate. The enzyme catalyses (2E)-geranyl diphosphate = (4S)-limonene + diphosphate. It functions in the pathway secondary metabolite biosynthesis; terpenoid biosynthesis. In terms of biological role, monoterpene synthase which catalyzes the conversion of (2E)-geranyl diphosphate (GPP) to (R)-alpha-terpineol and (4S)-limonene, as well as small quantities of linalool, myrcene, (-)-alpha-pinene, (+)-sabinene and geraniol. To a lower extent, catalyzes the conversion of (2E,6E)-farnesyl diphosphate (FPP) to beta-bisabolene. The protein is (+)-alpha-terpineol synthase of Santalum album (White sandalwood).